The sequence spans 570 residues: Phosphoribosylaminoimidazole carboxylase (570 aa).

Residues 110-297 (KQHLVKNRIP…QFEAHLRAIL (188 aa)) form the ATP-grasp domain. 137 to 192 (GSSLGYPFVLKSRTLAYDGRGNFVVKSEEDIEKGLEFLANRPLYAEKWASFKKELS) serves as a coordination point for ATP.

This sequence in the C-terminal section; belongs to the AIR carboxylase family. Class I subfamily.

It catalyses the reaction 5-amino-1-(5-phospho-D-ribosyl)imidazole-4-carboxylate + H(+) = 5-amino-1-(5-phospho-beta-D-ribosyl)imidazole + CO2. The protein operates within purine metabolism; IMP biosynthesis via de novo pathway; 5-amino-1-(5-phospho-D-ribosyl)imidazole-4-carboxylate from 5-amino-1-(5-phospho-D-ribosyl)imidazole (carboxylase route): step 1/1. The chain is Phosphoribosylaminoimidazole carboxylase (ADE2) from Candida glabrata (strain ATCC 2001 / BCRC 20586 / JCM 3761 / NBRC 0622 / NRRL Y-65 / CBS 138) (Yeast).